The following is a 322-amino-acid chain: Quinolinate synthase (322 aa).

2 residues coordinate iminosuccinate: His-38 and Ser-55. Cys-100 provides a ligand contact to [4Fe-4S] cluster. Residues 126–128 (YIN) and Ser-143 each bind iminosuccinate. [4Fe-4S] cluster is bound at residue Cys-186. Residues 212–214 (HPE) and Thr-229 each bind iminosuccinate. Cys-279 is a binding site for [4Fe-4S] cluster.

It belongs to the quinolinate synthase family. Type 2 subfamily. It depends on [4Fe-4S] cluster as a cofactor.

The protein resides in the cytoplasm. The catalysed reaction is iminosuccinate + dihydroxyacetone phosphate = quinolinate + phosphate + 2 H2O + H(+). Its pathway is cofactor biosynthesis; NAD(+) biosynthesis; quinolinate from iminoaspartate: step 1/1. Catalyzes the condensation of iminoaspartate with dihydroxyacetone phosphate to form quinolinate. This chain is Quinolinate synthase, found in Aquifex aeolicus (strain VF5).